A 55-amino-acid chain; its full sequence is Large ribosomal subunit protein bL33 (55 aa).

It belongs to the bacterial ribosomal protein bL33 family.

This is Large ribosomal subunit protein bL33 from Pectobacterium carotovorum subsp. carotovorum (strain PC1).